A 757-amino-acid polypeptide reads, in one-letter code: Polyribonucleotide nucleotidyltransferase (757 aa).

Mg(2+)-binding residues include aspartate 488 and aspartate 494. The KH domain maps to proline 555–isoleucine 614. The 69-residue stretch at glycine 624 to lysine 692 folds into the S1 motif domain. Residues valine 693–glycine 757 are disordered. Residues alanine 720–proline 736 show a composition bias toward basic and acidic residues. Residues proline 737–proline 747 show a composition bias toward low complexity.

The protein belongs to the polyribonucleotide nucleotidyltransferase family. It depends on Mg(2+) as a cofactor.

It localises to the cytoplasm. It catalyses the reaction RNA(n+1) + phosphate = RNA(n) + a ribonucleoside 5'-diphosphate. Its function is as follows. Involved in mRNA degradation. Catalyzes the phosphorolysis of single-stranded polyribonucleotides processively in the 3'- to 5'-direction. This is Polyribonucleotide nucleotidyltransferase from Verminephrobacter eiseniae (strain EF01-2).